The chain runs to 142 residues: Deoxyuridine 5'-triphosphate nucleotidohydrolase (142 aa).

Residues 62–64 (RSG), Asn75, 79–81 (TID), and Lys89 contribute to the substrate site.

The protein belongs to the dUTPase family. Mg(2+) serves as cofactor.

It carries out the reaction dUTP + H2O = dUMP + diphosphate + H(+). The protein operates within pyrimidine metabolism; dUMP biosynthesis; dUMP from dCTP (dUTP route): step 2/2. Functionally, this enzyme is involved in nucleotide metabolism: it produces dUMP, the immediate precursor of thymidine nucleotides and it decreases the intracellular concentration of dUTP so that uracil cannot be incorporated into DNA. This chain is Deoxyuridine 5'-triphosphate nucleotidohydrolase, found in Nautilia profundicola (strain ATCC BAA-1463 / DSM 18972 / AmH).